Consider the following 209-residue polypeptide: MAGSSEQQLVANAAATTVAGNGSRFAVTCGLLRQYMKEHSGSNGGGGFLPAVTAMSLMTGGADAEEEAPEVRKTMELFPQQAGTLKDTQERKEITEKAQLTIFYGGSVVVFDDFPAEKAGELMKLAGSRDSTAAAAVSDAGAAAGQPCLPDMPIARKVSLQRFLEKRKNRIVVAEPLPESEKKEAESSKRAKKDDGGASWLQVNPTLSL.

In terms of domain architecture, Tify spans 93–128 (EITEKAQLTIFYGGSVVVFDDFPAEKAGELMKLAGS). A Jas motif is present at residues 153 to 177 (PIARKVSLQRFLEKRKNRIVVAEPL). Residues 155–162 (ARKVSLQR) carry the Nuclear localization signal motif. The tract at residues 175-209 (EPLPESEKKEAESSKRAKKDDGGASWLQVNPTLSL) is disordered. Residues 179 to 196 (ESEKKEAESSKRAKKDDG) are compositionally biased toward basic and acidic residues.

This sequence belongs to the TIFY/JAZ family. Post-translationally, ubiquitinated. Targeted for degradation by the SCF(COI1) E3 ubiquitin ligase-proteasome pathway during jasmonate signaling.

It localises to the nucleus. Functionally, repressor of jasmonate responses. This chain is Protein TIFY 11c, found in Oryza sativa subsp. indica (Rice).